The sequence spans 311 residues: uncharacterized protein (311 aa).

A signal peptide spans 1–13; the sequence is MLLSLIFPIAVLG. An N-linked (GlcNAc...) asparagine glycan is attached at asparagine 115.

The protein localises to the secreted. This is an uncharacterized protein from Encephalitozoon cuniculi (strain GB-M1) (Microsporidian parasite).